A 5146-amino-acid polypeptide reads, in one-letter code: SCO-spondin (5146 aa).

The first 17 residues, 1–17, serve as a signal peptide directing secretion; sequence MLLPALLFGAAWALANG. The EMI domain occupies 18-94; that stretch reads RWCEQTETVL…ACCPGWGGTH (77 aa). Residues asparagine 80, asparagine 122, and asparagine 153 are each glycosylated (N-linked (GlcNAc...) asparagine). One can recognise a VWFD 1 domain in the interval 185-356; the sequence is ATCATWSGFH…RLPDSELGCL (172 aa). Disulfide bonds link cysteine 187–cysteine 317, cysteine 209–cysteine 355, and cysteine 231–cysteine 237. Asparagine 255 is a glycosylation site (N-linked (GlcNAc...) asparagine). The TIL 1 domain occupies 464-519; it reads CPGGQLYSDCASACPPSCSAVGEGSEWSCGEECVSGCECPPGLFWDGALCVPAARC. Positions 557 to 730 constitute a VWFD 2 domain; it reads AECAVGGDGH…FQVAGGGTCS (174 aa). Cystine bridges form between cysteine 559/cysteine 692 and cysteine 583/cysteine 729. A glycan (N-linked (GlcNAc...) asparagine) is linked at asparagine 814. A TIL 2 domain is found at 822 to 875; that stretch reads CPGGQEYQECAPACDRNCGEPEDCGELDNCVAGCNCPLGLLWDPEGQCVPPNLC. Asparagine 906 is a glycosylation site (N-linked (GlcNAc...) asparagine). In terms of domain architecture, VWFD 3 spans 1008–1178; that stretch reads GRCRASGAPH…HSWRLGPLCP (171 aa). Disulfide bonds link cysteine 1010–cysteine 1142, cysteine 1032–cysteine 1177, and cysteine 1053–cysteine 1060. Residues 1271 to 1327 enclose the TIL 3 domain; sequence CERGQVYEACGPTCPATCHDHRPEPGWPCRAVACVEGCFCPEGTLLHGGVCLEPAAC. N-linked (GlcNAc...) asparagine glycosylation occurs at asparagine 1349. LDL-receptor class A domains follow at residues 1372-1409, 1412-1447, 1448-1484, 1488-1526, 1561-1597, and 1599-1638; these read GCAEGETPCRESGHCVPHGWLCDNQDDCGDGSDEEGCA, VCGEGQVSCCSGRCLPLVLLCDGQDDCGDGMDEQGC, PCPQDSLTCADGHCLPPARLCDGHPDCPDGADEESCL, DCAPGEVSCVDGTCLGAIQLCDGVWDCLDGGDEGPGHCP, PCGPLDFACGSGECAPRGWRCDGEEDCADGSDESGCD, and PCAPHHAPCARGSHCVAAEQLCDGVPHCPDGSDEDPGACE. Intrachain disulfides connect cysteine 1373–cysteine 1386, cysteine 1380–cysteine 1399, cysteine 1393–cysteine 1408, cysteine 1413–cysteine 1425, cysteine 1420–cysteine 1438, cysteine 1432–cysteine 1447, cysteine 1449–cysteine 1461, cysteine 1456–cysteine 1474, cysteine 1468–cysteine 1483, cysteine 1489–cysteine 1501, cysteine 1496–cysteine 1514, cysteine 1508–cysteine 1525, cysteine 1562–cysteine 1574, cysteine 1569–cysteine 1587, cysteine 1581–cysteine 1596, cysteine 1600–cysteine 1613, cysteine 1607–cysteine 1626, and cysteine 1620–cysteine 1637. Asparagine 1647 carries an N-linked (GlcNAc...) asparagine glycan. In terms of domain architecture, LDL-receptor class A 7 spans 1652–1690; it reads PCPEYSCPDGLCIGFQQVCDGQPDCELAGTAGPSPEEQG. TSP type-1 domains are found at residues 1691–1745 and 1747–1805; these read CGAW…AACP and DGVW…DGCP. 3 disulfides stabilise this stretch: cysteine 1703-cysteine 1739, cysteine 1707-cysteine 1744, and cysteine 1718-cysteine 1729. A glycan (N-linked (GlcNAc...) asparagine) is linked at asparagine 1806. One can recognise a TIL 4 domain in the interval 1809 to 1865; the sequence is CSGELVFHACVPCPLTCDDISGQATCPPDRPCGGPGCWCPAGQVLGAQGRCVWPRQC. 2 EGF-like domains span residues 1821-1860 and 1861-1898; these read CPLTCDDISGQATCPPDRPCGGPGCWCPAGQVLGAQGRCV and WPRQCPCLVDGSRYWPGQRVKTDCQLCVCQDGRPRRCQ. The 57-residue stretch at 1906–1962 folds into the TSP type-1 3 domain; sequence NCGWSAWSPWAECLGPCGSRSVQWSFRSPNNPRPAGRGHQCRGLHRKARRCQTEPCE. Disulfide bonds link cysteine 1907-cysteine 1946, cysteine 1918-cysteine 1922, and cysteine 1956-cysteine 1961. The VWFC 1 domain occupies 1962–2022; the sequence is EGCEQDGRVH…GVGESCCHCV (61 aa). Residues asparagine 2027 and asparagine 2127 are each glycosylated (N-linked (GlcNAc...) asparagine). 4 cysteine pairs are disulfide-bonded: cysteine 2062/cysteine 2220, cysteine 2226/cysteine 2238, cysteine 2233/cysteine 2251, and cysteine 2245/cysteine 2260. The region spanning 2062 to 2220 is the F5/8 type C domain; sequence CYSPLGLARL…GPLRVELLGC (159 aa). Positions 2225 to 2261 constitute an LDL-receptor class A 8 domain; sequence LCLGVGHRCVSGECAPRGAPCDGVEDCKDGSDEEGCV. The disordered stretch occupies residues 2262–2346; it reads TPPAGAGRIE…TPTSQPEAQA (85 aa). Polar residues-rich tracts occupy residues 2273 to 2284 and 2331 to 2343; these read TAWSSAPSSAQP and GSVQTVTPTSQPE. LDL-receptor class A domains follow at residues 2382 to 2418 and 2442 to 2478; these read QCSPGQVPCEVLGCVELEQLCDGREDCLDGSDERPCA and LCSPSQLTCGSGECLPVERRCDLQLDCQDGSDENGCV. Cystine bridges form between cysteine 2383-cysteine 2395, cysteine 2390-cysteine 2408, cysteine 2402-cysteine 2417, cysteine 2443-cysteine 2455, cysteine 2450-cysteine 2468, cysteine 2462-cysteine 2477, cysteine 2480-cysteine 2516, cysteine 2491-cysteine 2495, cysteine 2526-cysteine 2531, cysteine 2546-cysteine 2583, cysteine 2550-cysteine 2588, and cysteine 2561-cysteine 2573. TSP type-1 domains are found at residues 2479 to 2532 and 2534 to 2589; these read DCGL…QACP and AGAW…QPCA. Positions 2611-2654 constitute a TIL 5 domain; the sequence is VPPCPPSCLDPEANRSCSGLCLEGCRCPPGLLLQDAGCLPLSEC. Asparagine 2624 and asparagine 2673 each carry an N-linked (GlcNAc...) asparagine glycan. 3 consecutive TSP type-1 domains span residues 2694 to 2748, 2751 to 2807, and 2809 to 2862; these read PCGW…SACG, VPGW…PVCL, and LGVW…QPCT. 9 disulfide bridges follow: cysteine 2695/cysteine 2733, cysteine 2706/cysteine 2710, cysteine 2743/cysteine 2747, cysteine 2763/cysteine 2801, cysteine 2767/cysteine 2806, cysteine 2783/cysteine 2791, cysteine 2821/cysteine 2856, cysteine 2825/cysteine 2861, and cysteine 2836/cysteine 2846. N-linked (GlcNAc...) asparagine glycosylation is found at asparagine 2915 and asparagine 2946. TSP type-1 domains follow at residues 2964–3019 and 3020–3071; these read ACGW…RPCG and GPAG…GVCP. 3 disulfide bridges follow: cysteine 2965–cysteine 3003, cysteine 2976–cysteine 2980, and cysteine 3013–cysteine 3018. Residue asparagine 3041 is glycosylated (N-linked (GlcNAc...) asparagine). The 53-residue stretch at 3070 to 3122 folds into the TIL 6 domain; the sequence is CPPGKRWLDCAQGPASCAELSAPRGADQPCHPGCYCPSGMLLLNNACVPTQDC. N-linked (GlcNAc...) asparagine glycans are attached at residues asparagine 3143 and asparagine 3153. 2 TSP type-1 domains span residues 3163–3230 and 3232–3287; these read QPTW…PECD and AGGW…LPCP. Cystine bridges form between cysteine 3175–cysteine 3224, cysteine 3179–cysteine 3229, cysteine 3190–cysteine 3214, cysteine 3244–cysteine 3281, cysteine 3248–cysteine 3286, and cysteine 3259–cysteine 3271. Residue asparagine 3290 is glycosylated (N-linked (GlcNAc...) asparagine). The 51-residue stretch at 3295–3345 folds into the TIL 7 domain; sequence EGAEYSACGPPCPRSCDDLVHCVWHCQPGCYCPPGQVLSADGTVHVQPGHC. 2 TSP type-1 domains span residues 3388-3450 and 3452-3507; these read PGAW…PECP and DGAW…TQCT. Cystine bridges form between cysteine 3400–cysteine 3443, cysteine 3404–cysteine 3449, cysteine 3415–cysteine 3427, cysteine 3464–cysteine 3499, cysteine 3467–cysteine 3506, and cysteine 3477–cysteine 3489. Asparagine 3502, asparagine 3580, and asparagine 3607 each carry an N-linked (GlcNAc...) asparagine glycan. Residues 3626 to 3674 enclose the TSP type-1 15 domain; that stretch reads LGLWGSWGPWEDCSVSCGGGEQLRFRRCPRPPCPGPARQSRTCRTQVCR. 3 cysteine pairs are disulfide-bonded: cysteine 3638-cysteine 3668, cysteine 3642-cysteine 3673, and cysteine 3653-cysteine 3658. N-linked (GlcNAc...) asparagine glycosylation is present at asparagine 3783. TSP type-1 domains are found at residues 3802-3858, 3872-3924, 3938-3994, and 3996-4051; these read AGGF…PECP, PGGW…PSCT, NCSW…RACP, and PGGW…TPCE. 3 cysteine pairs are disulfide-bonded: cysteine 3814-cysteine 3852, cysteine 3818-cysteine 3857, and cysteine 3830-cysteine 3842. Asparagine 3906 and asparagine 3938 each carry an N-linked (GlcNAc...) asparagine glycan. 6 cysteine pairs are disulfide-bonded: cysteine 3939–cysteine 3975, cysteine 3950–cysteine 3954, cysteine 3988–cysteine 3993, cysteine 4008–cysteine 4045, cysteine 4012–cysteine 4050, and cysteine 4023–cysteine 4035. One can recognise a TIL 8 domain in the interval 4054–4109; sequence CPAGMEVVSCANRCPRRCSDLQEGIVCQEDQACQQGCRCPEGSLEQDGGCVPLGHC. A VWFC 2 domain is found at 4101 to 4168; the sequence is GGCVPLGHCE…AWSPCSRSCG (68 aa). Asparagine 4131 carries N-linked (GlcNAc...) asparagine glycosylation. 4 TSP type-1 domains span residues 4151–4204, 4245–4300, 4302–4358, and 4360–4414; these read HCAW…SPCP, LGAW…WPCP, LPDT…GPCL, and ECVW…GNCS. Cystine bridges form between cysteine 4152–cysteine 4188, cysteine 4163–cysteine 4167, cysteine 4198–cysteine 4203, cysteine 4257–cysteine 4294, cysteine 4261–cysteine 4299, and cysteine 4272–cysteine 4284. An N-linked (GlcNAc...) asparagine glycan is attached at asparagine 4341. 3 disulfide bridges follow: cysteine 4361–cysteine 4398, cysteine 4372–cysteine 4374, and cysteine 4408–cysteine 4413. An N-linked (GlcNAc...) asparagine glycan is attached at asparagine 4412. Positions 4418–4473 constitute a TIL 9 domain; it reads CAPPFEFQACGSPCTGLCATYLSPWLCQDLPPCQPGCYCPEGLLEQAGGCVPPEQC. The TSP type-1 24 domain maps to 4610-4661; it reads LCQWGPWGAWSPCQVPCSGGFRLRWREAGIPPGGGCRGPWAQTESCNMGPCP. 3 disulfide bridges follow: cysteine 4611-cysteine 4645, cysteine 4622-cysteine 4626, and cysteine 4655-cysteine 4660. Positions 4675 to 4721 constitute a TIL 10 domain; that stretch reads DCANQCPRSCVDLWDRVECLQGPCRPGCRCPPGQLVQDGHCVPVSSC. Asparagine 4729, asparagine 4746, asparagine 4751, and asparagine 4772 each carry an N-linked (GlcNAc...) asparagine glycan. Residues 4761–4814 form the TSP type-1 25 domain; the sequence is CPTLGPWSAWSNCSAPCGGGTTKRHRSCKEGPGVTPCQAQDMEQQQDCNLQPCP. 3 cysteine pairs are disulfide-bonded: cysteine 4773-cysteine 4808, cysteine 4777-cysteine 4813, and cysteine 4788-cysteine 4797. The TIL 11 domain maps to 4816-4870; the sequence is CPPGQVLSACAVSCPRLCSHLQPGTPCMQEPCQLGCDCPRGQLLHNGTCVPPAEC. Residues asparagine 4861, asparagine 4901, asparagine 4947, and asparagine 4954 are each glycosylated (N-linked (GlcNAc...) asparagine). The region spanning 4983–5041 is the VWFC 3 domain; it reads CECWHHGRPHPPGSEWQKACESCRCVSGESICTQHCPPLTCAQGETAVQEPGGCCPTCR. Disulfide bonds link cysteine 5052–cysteine 5100, cysteine 5066–cysteine 5117, cysteine 5076–cysteine 5133, and cysteine 5080–cysteine 5135. Residues 5052–5139 form the CTCK domain; it reads CRHLTELRNL…IHSCQCSACQ (88 aa). N-linked (GlcNAc...) asparagine glycosylation is present at asparagine 5060.

The protein belongs to the thrombospondin family. Subcommissural organ. Located at the boundary of the diencephalon and mesencephalon beneath the posterior commissure at the point where the axons cross the midline.

The protein resides in the secreted. The protein localises to the extracellular space. Its function is as follows. Involved in the modulation of neuronal aggregation. May be involved in developmental events during the formation of the central nervous system. This is SCO-spondin (SSPO) from Bos taurus (Bovine).